A 153-amino-acid chain; its full sequence is MAPKAEKKPAAKKPAEEEPAAEKAEKAPAGKKPKAEKRLPAGKGEKGSGEGKKAGRKKGKKSVETYKIYIFKVLKQVHPDIGISSKAMSIMNSFINDIFEKLAAEAAKLARYNKKPTITSREIQTAVRLVLPGELAKHAVSEGTKAVTKFTSS.

Composition is skewed to basic and acidic residues over residues 1–28 and 36–53; these read MAPK…EKAP and EKRL…EGKK. The disordered stretch occupies residues 1–60; the sequence is MAPKAEKKPAAKKPAEEEPAAEKAEKAPAGKKPKAEKRLPAGKGEKGSGEGKKAGRKKGK. An N6-acetyllysine mark is found at Lys-7 and Lys-37. A Glycyl lysine isopeptide (Lys-Gly) (interchain with G-Cter in ubiquitin) cross-link involves residue Lys-149.

The protein belongs to the histone H2B family. The nucleosome is a histone octamer containing two molecules each of H2A, H2B, H3 and H4 assembled in one H3-H4 heterotetramer and two H2A-H2B heterodimers. The octamer wraps approximately 147 bp of DNA. Can be acetylated to form H2BK6ac and H2BK33ac. In terms of processing, monoubiquitinated by BRE1 to form H2BK143ub1 and deubiquitinated by UBP26. Required for heterochromatic histone H3 di- and trimethylation at H3K4me. May give a specific tag for epigenetic transcriptional activation.

The protein resides in the nucleus. It localises to the chromosome. In terms of biological role, core component of nucleosome. Nucleosomes wrap and compact DNA into chromatin, limiting DNA accessibility to the cellular machineries which require DNA as a template. Histones thereby play a central role in transcription regulation, DNA repair, DNA replication and chromosomal stability. DNA accessibility is regulated via a complex set of post-translational modifications of histones, also called histone code, and nucleosome remodeling. This chain is Histone H2B.6 (H2B.6), found in Oryza sativa subsp. japonica (Rice).